Here is a 66-residue protein sequence, read N- to C-terminus: MAFLKKSLFLVLFLGLVSLSICEEEKRETEEEENEQEDDDKSEEKRFLSLIPHAINAVSAIAKHFG.

An N-terminal signal peptide occupies residues Met-1–Cys-22. A propeptide spanning residues Glu-23 to Glu-44 is cleaved from the precursor. A disordered region spans residues Glu-24 to Glu-44. Positions Glu-30–Lys-41 are enriched in acidic residues. Phe-65 bears the Phenylalanine amide mark.

As to expression, expressed by the skin glands.

The protein localises to the secreted. Has antibacterial activity against the Gram-negative bacteria E.coli and P.aeruginosa, and the Gram-positive bacterium S.aureus. No hemolytic activity. This is Phylloseptin-H5 (psn7) from Pithecopus hypochondrialis (Orange-legged leaf frog).